We begin with the raw amino-acid sequence, 384 residues long: MSCDYFNRGLCQSCRLMSKPVTEQLLEKEARLTHLLGGLPVDERLAPVSGPEFGFRNKAKMVVMGAAHAPVLGIPGPDGQPVDLSHCPLYPQDMQALLLELTSFVRRAGIPPYRVDKAKGELKFILLTRSAVRGEFMLRFVLRSKDAIPRIERELPKLLADFPAIKVVSVNLQPVHMARLEGEEEIFLTQATRLDEVFNGVPLFIRPKSFFQTNPEVASRLYATAAKWVDELSPKSLWDLFCGVGGFGLHCANESLPVTGIEIEAEAIDCAKTSAAAMGLDNLSFAALDSTDFAMGQQAQEVPEVIIVNPPRRGIGEELCERLSAFGPRAIIYSSCNPETLAKDLALISGYRIARVQLFDMFPHSDHFEVLCLLLKEAACASAD.

Cysteine 3, cysteine 11, cysteine 14, and cysteine 87 together coordinate [4Fe-4S] cluster. S-adenosyl-L-methionine contacts are provided by glutamine 212, phenylalanine 241, glutamate 262, and asparagine 309. The active-site Nucleophile is cysteine 336.

The protein belongs to the class I-like SAM-binding methyltransferase superfamily. RNA M5U methyltransferase family. RlmC subfamily.

It catalyses the reaction uridine(747) in 23S rRNA + S-adenosyl-L-methionine = 5-methyluridine(747) in 23S rRNA + S-adenosyl-L-homocysteine + H(+). Functionally, catalyzes the formation of 5-methyl-uridine at position 747 (m5U747) in 23S rRNA. The protein is 23S rRNA (uracil(747)-C(5))-methyltransferase RlmC of Shewanella amazonensis (strain ATCC BAA-1098 / SB2B).